The primary structure comprises 734 residues: Ribosomal RNA large subunit methyltransferase K/L (734 aa).

The THUMP domain occupies 49-167 (HAYRICMWSR…KTEHTYCLDL (119 aa)).

Belongs to the methyltransferase superfamily. RlmKL family.

The protein localises to the cytoplasm. The catalysed reaction is guanosine(2445) in 23S rRNA + S-adenosyl-L-methionine = N(2)-methylguanosine(2445) in 23S rRNA + S-adenosyl-L-homocysteine + H(+). The enzyme catalyses guanosine(2069) in 23S rRNA + S-adenosyl-L-methionine = N(2)-methylguanosine(2069) in 23S rRNA + S-adenosyl-L-homocysteine + H(+). Specifically methylates the guanine in position 2445 (m2G2445) and the guanine in position 2069 (m7G2069) of 23S rRNA. The protein is Ribosomal RNA large subunit methyltransferase K/L of Acinetobacter baumannii (strain SDF).